Consider the following 479-residue polypeptide: Aspartyl/glutamyl-tRNA(Asn/Gln) amidotransferase subunit B (479 aa).

This sequence belongs to the GatB/GatE family. GatB subfamily. In terms of assembly, heterotrimer of A, B and C subunits.

It catalyses the reaction L-glutamyl-tRNA(Gln) + L-glutamine + ATP + H2O = L-glutaminyl-tRNA(Gln) + L-glutamate + ADP + phosphate + H(+). The enzyme catalyses L-aspartyl-tRNA(Asn) + L-glutamine + ATP + H2O = L-asparaginyl-tRNA(Asn) + L-glutamate + ADP + phosphate + 2 H(+). Its function is as follows. Allows the formation of correctly charged Asn-tRNA(Asn) or Gln-tRNA(Gln) through the transamidation of misacylated Asp-tRNA(Asn) or Glu-tRNA(Gln) in organisms which lack either or both of asparaginyl-tRNA or glutaminyl-tRNA synthetases. The reaction takes place in the presence of glutamine and ATP through an activated phospho-Asp-tRNA(Asn) or phospho-Glu-tRNA(Gln). The chain is Aspartyl/glutamyl-tRNA(Asn/Gln) amidotransferase subunit B from Clostridium beijerinckii (strain ATCC 51743 / NCIMB 8052) (Clostridium acetobutylicum).